The chain runs to 46 residues: METSSPALSVAIGVLAVLLGMTGFGVYQAFGPPSKALDDPFDDHED.

A helical membrane pass occupies residues 7-27; it reads ALSVAIGVLAVLLGMTGFGVY.

Belongs to the PsbN family.

Its subcellular location is the cellular thylakoid membrane. Functionally, may play a role in photosystem I and II biogenesis. This is Protein PsbN from Parasynechococcus marenigrum (strain WH8102).